Here is a 341-residue protein sequence, read N- to C-terminus: Ketol-acid reductoisomerase (NADP(+)) (341 aa).

One can recognise a KARI N-terminal Rossmann domain in the interval 2 to 182; the sequence is TDIVYDKDAD…GGLRAGGIRT (181 aa). NADP(+) is bound by residues 25-28, Lys-48, Ser-51, Ser-53, and 83-86; these read YGSQ and DQHQ. Residue His-108 is part of the active site. Position 134 (Gly-134) interacts with NADP(+). In terms of domain architecture, KARI C-terminal knotted spans 183–328; that stretch reads TFTEETETDL…RELRKLFAWN (146 aa). Mg(2+) contacts are provided by Asp-191, Glu-195, Glu-227, and Glu-231. Ser-252 is a binding site for substrate.

It belongs to the ketol-acid reductoisomerase family. The cofactor is Mg(2+).

It carries out the reaction (2R)-2,3-dihydroxy-3-methylbutanoate + NADP(+) = (2S)-2-acetolactate + NADPH + H(+). It catalyses the reaction (2R,3R)-2,3-dihydroxy-3-methylpentanoate + NADP(+) = (S)-2-ethyl-2-hydroxy-3-oxobutanoate + NADPH + H(+). The protein operates within amino-acid biosynthesis; L-isoleucine biosynthesis; L-isoleucine from 2-oxobutanoate: step 2/4. Its pathway is amino-acid biosynthesis; L-valine biosynthesis; L-valine from pyruvate: step 2/4. Involved in the biosynthesis of branched-chain amino acids (BCAA). Catalyzes an alkyl-migration followed by a ketol-acid reduction of (S)-2-acetolactate (S2AL) to yield (R)-2,3-dihydroxy-isovalerate. In the isomerase reaction, S2AL is rearranged via a Mg-dependent methyl migration to produce 3-hydroxy-3-methyl-2-ketobutyrate (HMKB). In the reductase reaction, this 2-ketoacid undergoes a metal-dependent reduction by NADPH to yield (R)-2,3-dihydroxy-isovalerate. The chain is Ketol-acid reductoisomerase (NADP(+)) from Clavibacter sepedonicus (Clavibacter michiganensis subsp. sepedonicus).